The primary structure comprises 162 residues: Putative 4-hydroxy-4-methyl-2-oxoglutarate aldolase (162 aa).

Substrate-binding positions include 75–78 (GDML) and R97. D98 lines the a divalent metal cation pocket.

The protein belongs to the class II aldolase/RraA-like family. In terms of assembly, homotrimer. A divalent metal cation serves as cofactor.

It carries out the reaction 4-hydroxy-4-methyl-2-oxoglutarate = 2 pyruvate. The enzyme catalyses oxaloacetate + H(+) = pyruvate + CO2. Its function is as follows. Catalyzes the aldol cleavage of 4-hydroxy-4-methyl-2-oxoglutarate (HMG) into 2 molecules of pyruvate. Also contains a secondary oxaloacetate (OAA) decarboxylase activity due to the common pyruvate enolate transition state formed following C-C bond cleavage in the retro-aldol and decarboxylation reactions. In Stutzerimonas stutzeri (strain A1501) (Pseudomonas stutzeri), this protein is Putative 4-hydroxy-4-methyl-2-oxoglutarate aldolase.